The chain runs to 377 residues: Transcription factor ast-1 (377 aa).

A disordered region spans residues 72–143 (PNRMLYNDNT…SNGSSSSTES (72 aa)). Composition is skewed to low complexity over residues 96 to 109 (STSA…TSSK) and 118 to 142 (TESS…SSTE). A DNA-binding region (ETS) is located at residues 214–294 (TQLWQFLLEL…HGKRYAYKFD (81 aa)).

It belongs to the ETS family. In terms of tissue distribution, expressed in the A-neurons in the male-specific genital sensilla (simple sense organs) known as rays.

The protein resides in the nucleus. It localises to the cell projection. It is found in the neuron projection. In terms of biological role, transcription factor. Probably binds to DNA sequences containing the consensus motif 5'-CGGA[AT][AG]-3'. Positively modulates expression of dopamine pathway genes, acting as a terminal selector for differentiation of dopaminergic neurons; may act in concert with homeobox proteins ceh-40, ceh-43 and ceh-20. Required for axon navigation in some interneurons, perhaps acting in the same pathways as basement membrane protein nid-1 and unc-6/netrin. Plays a role in the differentiation of the ventral cord pioneer neuron AVG. Required for morphogenesis of the pharynx. The sequence is that of Transcription factor ast-1 from Caenorhabditis elegans.